We begin with the raw amino-acid sequence, 671 residues long: Probable potassium transport system protein Kup (671 aa).

Residues 1–43 (MSQIPSPNDPASTGAAPSSAAVPAGPSATPAPSPTAGFSLPGH) form a disordered region. Residues 10–37 (PASTGAAPSSAAVPAGPSATPAPSPTAG) show a composition bias toward low complexity. The next 12 membrane-spanning stretches (helical) occupy residues 52–72 (LAAL…TSPL), 92–112 (VLGV…FKYM), 147–167 (LMLG…TPAI), 181–201 (PAME…LFLF), 209–229 (VGAV…VLGV), 255–275 (GWHG…GEAL), 291–311 (WLGL…ALLL), 323–343 (LLAP…AAIV), 381–401 (IYLP…VLGF), 407–427 (LASA…LLFH), 441–461 (AWPL…ANVV), and 465–485 (DGGW…STWK).

The protein belongs to the HAK/KUP transporter (TC 2.A.72) family.

It is found in the cell inner membrane. It carries out the reaction K(+)(in) + H(+)(in) = K(+)(out) + H(+)(out). Transport of potassium into the cell. Likely operates as a K(+):H(+) symporter. The sequence is that of Probable potassium transport system protein Kup from Anaeromyxobacter sp. (strain K).